The primary structure comprises 244 residues: tRNA pseudouridine synthase A (244 aa).

Catalysis depends on aspartate 52, which acts as the Nucleophile. Tyrosine 110 is a binding site for substrate.

The protein belongs to the tRNA pseudouridine synthase TruA family. As to quaternary structure, homodimer.

The enzyme catalyses uridine(38/39/40) in tRNA = pseudouridine(38/39/40) in tRNA. Formation of pseudouridine at positions 38, 39 and 40 in the anticodon stem and loop of transfer RNAs. The chain is tRNA pseudouridine synthase A from Finegoldia magna (strain ATCC 29328 / DSM 20472 / WAL 2508) (Peptostreptococcus magnus).